Consider the following 423-residue polypeptide: MKAELIAVGTEILTGQITNTNAQFLSEKLAELGIDVYFHTAVGDNENRLLSVLDQSSKRSDLVILCGGLGPTEDDLTKQTLAKFLGKELIFDEEASKKLDSFFATRPKHTRTPNNERQAQIVEGAVPLQNLTGLAVGGIITVEGVTYVVLPGPPSELKPMVNQELIPALTENHTTLYSRVLRFFGVGESQLVTIIKDLIVNQTDPTIAPYAKVGEVTLRLSTKASSQEEADRKLDVLEEQIRSTKTLDGKSLSDLIYGYGESNSLAYEVFYLLKKYGKTITAAESLTAGLFQASVADFPGASQVFKGGFVTYSMEEKAKMLGIPLSKLEEHGVVSHFTAEKMAEGARVKTDSDYGIALTGVAGPDALEGHQAGTVFIGIADRNQVRSIKVVIGGRSRSDVRYISTLYAFNLVRQALLQEDNSI.

The protein belongs to the CinA family.

The polypeptide is Putative competence-damage inducible protein (Streptococcus thermophilus (strain ATCC BAA-491 / LMD-9)).